Reading from the N-terminus, the 95-residue chain is Co-chaperonin GroES (95 aa).

The protein belongs to the GroES chaperonin family. In terms of assembly, heptamer of 7 subunits arranged in a ring. Interacts with the chaperonin GroEL.

It localises to the cytoplasm. Functionally, together with the chaperonin GroEL, plays an essential role in assisting protein folding. The GroEL-GroES system forms a nano-cage that allows encapsulation of the non-native substrate proteins and provides a physical environment optimized to promote and accelerate protein folding. GroES binds to the apical surface of the GroEL ring, thereby capping the opening of the GroEL channel. In Rickettsia canadensis (strain McKiel), this protein is Co-chaperonin GroES.